The chain runs to 320 residues: Cytochrome f (320 aa).

Residues 1 to 35 (MKLNSLINLIQKSIYSCTLLLIILNIICVAPNSSN) form the signal peptide. Phenylalanine 37, cysteine 57, cysteine 60, and histidine 61 together coordinate heme. A helical transmembrane segment spans residues 286-306 (IKGMIVFFFASVLAQIFFVLK).

It belongs to the cytochrome f family. The 4 large subunits of the cytochrome b6-f complex are cytochrome b6, subunit IV (17 kDa polypeptide, petD), cytochrome f and the Rieske protein, while the 4 small subunits are PetG, PetL, PetM and PetN. The complex functions as a dimer. It depends on heme as a cofactor.

It is found in the plastid. It localises to the chloroplast thylakoid membrane. Its function is as follows. Component of the cytochrome b6-f complex, which mediates electron transfer between photosystem II (PSII) and photosystem I (PSI), cyclic electron flow around PSI, and state transitions. The chain is Cytochrome f from Pyropia yezoensis (Susabi-nori).